Reading from the N-terminus, the 130-residue chain is Small ribosomal subunit protein uS8 (130 aa).

The protein belongs to the universal ribosomal protein uS8 family. In terms of assembly, part of the 30S ribosomal subunit. Contacts proteins S5 and S12.

One of the primary rRNA binding proteins, it binds directly to 16S rRNA central domain where it helps coordinate assembly of the platform of the 30S subunit. The chain is Small ribosomal subunit protein uS8 from Pectobacterium atrosepticum (strain SCRI 1043 / ATCC BAA-672) (Erwinia carotovora subsp. atroseptica).